The chain runs to 221 residues: Germin-like protein subfamily 1 member 17 (221 aa).

An N-terminal signal peptide occupies residues 1–21; sequence MKVSMSLILITLSALVTIAKA. A disulfide bond links Cys31 and Cys48. The Cupin type-1 domain maps to 76 to 213; that stretch reads SNVTTVNVDQ…AFQLDVNVVK (138 aa). The N-linked (GlcNAc...) asparagine glycan is linked to Asn77. The Mn(2+) site is built by His110, His112, Glu117, and His159.

It belongs to the germin family. In terms of assembly, oligomer (believed to be a pentamer but probably hexamer).

It is found in the secreted. It localises to the extracellular space. The protein localises to the apoplast. Functionally, may play a role in plant defense. Probably has no oxalate oxidase activity even if the active site is conserved. This Arabidopsis thaliana (Mouse-ear cress) protein is Germin-like protein subfamily 1 member 17.